A 156-amino-acid chain; its full sequence is Small ribosomal subunit protein uS7 (156 aa).

This sequence belongs to the universal ribosomal protein uS7 family. As to quaternary structure, part of the 30S ribosomal subunit. Contacts proteins S9 and S11.

Functionally, one of the primary rRNA binding proteins, it binds directly to 16S rRNA where it nucleates assembly of the head domain of the 30S subunit. Is located at the subunit interface close to the decoding center, probably blocks exit of the E-site tRNA. The chain is Small ribosomal subunit protein uS7 from Afipia carboxidovorans (strain ATCC 49405 / DSM 1227 / KCTC 32145 / OM5) (Oligotropha carboxidovorans).